We begin with the raw amino-acid sequence, 336 residues long: uncharacterized protein (336 aa).

The first 23 residues, 1–23 (MKTRHLVYLAFALLGLGLAGLLE), serve as a signal peptide directing secretion. The next 3 helical transmembrane spans lie at 34–54 (LLSL…LLLG), 75–95 (VVVA…LLTT), and 106–126 (VHSL…ALGY). One can recognise a PINc domain in the interval 144-255 (VLDTSVLVDG…MARIYGVKAL (112 aa)). Aspartate 222 is a Mg(2+) binding site. Positions 267–328 (QLQVGDTLKL…IQTQVGRLFF (62 aa)) constitute a TRAM domain.

The protein belongs to the PINc/VapC protein family. Mg(2+) is required as a cofactor.

It localises to the membrane. Part of a toxin-antitoxin (TA) system. An RNase. This is an uncharacterized protein from Thermus thermophilus (strain ATCC 27634 / DSM 579 / HB8).